Consider the following 323-residue polypeptide: Serine/threonine-protein phosphatase PP1-gamma catalytic subunit (323 aa).

Ala2 is modified (N-acetylalanine). Mn(2+) contacts are provided by Asp64, His66, Asp92, and Asn124. His125 serves as the catalytic Proton donor. The Mn(2+) site is built by His173 and His248. The disordered stretch occupies residues 302–323; sequence KKPNATRPVTPPRGMITKQAKK. Phosphothreonine is present on residues Thr307 and Thr311.

This sequence belongs to the PPP phosphatase family. PP-1 subfamily. As to quaternary structure, PP1 comprises a catalytic subunit, PPP1CA, PPP1CB or PPP1CC, which is folded into its native form by inhibitor 2 and glycogen synthetase kinase 3, and then complexed to one or several targeting or regulatory subunits. PPP1R12A, PPP1R12B and PPP1R12C mediate binding to myosin. PPP1R3A (in skeletal muscle), PPP1R3B (in sliver), PPP1R3C, PPP1R3D and PPP1R3F (in brain) mediate binding to glycogen. PPP1R15A and PPP1R15B mediate binding to EIF2S1. Part of a complex containing PPP1R15B, PP1 and NCK1/2. Interacts with PPP1R3B, PPP1R7 and CDCA2. Isoform 2 interacts with SPZ1. Interacts with IKFZ1; the interaction targets PPP1CC to pericentromeric heterochromatin, dephosphorylates IKAROS, stabilizes it and prevents it from degradation. Interacts with NOM1 and PPP1R8. Component of the PTW/PP1 phosphatase complex, composed of PPP1R10/PNUTS, TOX4, WDR82, and PPP1CA or PPP1CB or PPP1CC. Interacts with PPP1R8. Interacts with NEK2. Interacts with URI1; the interaction is phosphorylation-dependent and occurs in a growth factor-dependent manner. Interacts with FOXP3. Interacts with TMEM225 (via RVxF motif). Interacts with MKI67. Interacts with RRP1B; this targets PPP1CC to the nucleolus. Found in a complex with PPP1CA, PPP1CC, SHC1 and PEAK1. Interacts with DYNLT4. Interacts (via RVxF motif) with FIRRM; regulates PLK1 kinase activity. Interacts with the KNL1 complex subunit KNL1; the interaction is direct and mutually exclusive with KNL1 binding to microtubules. Component of the SHOC2-MRAS-PP1c (SMP) complex consisting of SHOC2, GTP-bound M-Ras/MRAS and the catalytic subunit of protein phosphatase 1 (either PPP1CA, PPP1CB or PPP1CC). SHOC2 and PP1c preferably bind M-Ras/MRAS, but they also bind K-Ras/KRAS, N-Ras/NRAS and H-Ras/HRAS; these interactions are GTP-dependent and both SHOC2 and PP1c are required to form a stable complex. Interacts with SHOC2 in the absence of Ras GTPases. The cofactor is Mn(2+). Post-translationally, phosphorylated by NEK2. As to expression, isoform 2 is expressed only in testis, in the late spermatocytes and early spematids (at protein level).

It localises to the cytoplasm. The protein localises to the nucleus. It is found in the cleavage furrow. Its subcellular location is the nucleolus. The protein resides in the nucleoplasm. It localises to the chromosome. The protein localises to the centromere. It is found in the kinetochore. Its subcellular location is the nucleus speckle. The protein resides in the midbody. It localises to the mitochondrion. The protein localises to the cytoskeleton. It is found in the microtubule organizing center. It catalyses the reaction O-phospho-L-seryl-[protein] + H2O = L-seryl-[protein] + phosphate. It carries out the reaction O-phospho-L-threonyl-[protein] + H2O = L-threonyl-[protein] + phosphate. Its activity is regulated as follows. Inactivated by binding to URI1. In terms of biological role, protein phosphatase that associates with over 200 regulatory proteins to form highly specific holoenzymes which dephosphorylate hundreds of biological targets. Protein phosphatase 1 (PP1) is essential for cell division, and participates in the regulation of glycogen metabolism, muscle contractility and protein synthesis. Dephosphorylates RPS6KB1. Involved in regulation of ionic conductances and long-term synaptic plasticity. May play an important role in dephosphorylating substrates such as the postsynaptic density-associated Ca(2+)/calmodulin dependent protein kinase II. Component of the PTW/PP1 phosphatase complex, which plays a role in the control of chromatin structure and cell cycle progression during the transition from mitosis into interphase. In balance with CSNK1D and CSNK1E, determines the circadian period length, through the regulation of the speed and rhythmicity of PER1 and PER2 phosphorylation. May dephosphorylate CSNK1D and CSNK1E. Regulates the recruitment of the SKA complex to kinetochores. Core component of the SHOC2-MRAS-PP1c (SMP) holophosphatase complex that regulates the MAPK pathway activation. Dephosphorylates MKI67 at the onset of anaphase. The SMP complex specifically dephosphorylates the inhibitory phosphorylation at 'Ser-259' of RAF1 kinase, 'Ser-365' of BRAF kinase and 'Ser-214' of ARAF kinase, stimulating their kinase activities. The SMP complex enhances the dephosphorylation activity and substrate specificity of PP1c. Its function is as follows. Required for normal male fertility. The sequence is that of Serine/threonine-protein phosphatase PP1-gamma catalytic subunit (Ppp1cc) from Rattus norvegicus (Rat).